The following is a 197-amino-acid chain: Recombination protein RecR (197 aa).

Residues 55–70 (CVQCRDFTESEVCAIC) form a C4-type zinc finger. Positions 78-173 (QQLCVVESPA…RPSRLAQGMP (96 aa)) constitute a Toprim domain.

It belongs to the RecR family.

Functionally, may play a role in DNA repair. It seems to be involved in an RecBC-independent recombinational process of DNA repair. It may act with RecF and RecO. This is Recombination protein RecR from Xanthomonas campestris pv. campestris (strain 8004).